The following is a 599-amino-acid chain: Putative sensor histidine kinase NtrY-like (599 aa).

Helical transmembrane passes span 17–37, 44–64, 85–105, and 285–305; these read VLIF…FYVI, FSTI…LGVV, IVIA…VFSV, and IMFI…GVIF. Residues 307 to 361 form the HAMP domain; that stretch reads AKIVKPIKKLVTATDNVKDGDLTVQVPENEVDKDEIGTLYVAFNRMIKQLSRQQR. The 212-residue stretch at 378-589 folds into the Histidine kinase domain; that stretch reads KVAHEIKNPL…IIDIKFDLKE (212 aa). A Phosphohistidine; by autocatalysis modification is found at histidine 381.

Its subcellular location is the cell membrane. The enzyme catalyses ATP + protein L-histidine = ADP + protein N-phospho-L-histidine.. Member of the two-component regulatory system RC0948/RC0849. The polypeptide is Putative sensor histidine kinase NtrY-like (Rickettsia conorii (strain ATCC VR-613 / Malish 7)).